We begin with the raw amino-acid sequence, 499 residues long: Serine carboxypeptidase-like 34 (499 aa).

Positions 1–25 (MGSHSVEFSVLVLFLVSFLLGSTSA) are cleaved as a signal peptide. Asn73, Asn124, and Asn158 each carry an N-linked (GlcNAc...) asparagine glycan. Cystine bridges form between Cys106–Cys383, Cys269–Cys280, and Cys304–Cys351. Ser200 is a catalytic residue. N-linked (GlcNAc...) asparagine glycans are attached at residues Asn310, Asn372, and Asn375. Active-site residues include Asp419 and His471.

It belongs to the peptidase S10 family. As to expression, ubiquitous.

It is found in the secreted. Probable carboxypeptidase. The protein is Serine carboxypeptidase-like 34 (SCPL34) of Arabidopsis thaliana (Mouse-ear cress).